We begin with the raw amino-acid sequence, 419 residues long: Gamma-glutamyl phosphate reductase (419 aa).

It belongs to the gamma-glutamyl phosphate reductase family.

It localises to the cytoplasm. The enzyme catalyses L-glutamate 5-semialdehyde + phosphate + NADP(+) = L-glutamyl 5-phosphate + NADPH + H(+). The protein operates within amino-acid biosynthesis; L-proline biosynthesis; L-glutamate 5-semialdehyde from L-glutamate: step 2/2. Catalyzes the NADPH-dependent reduction of L-glutamate 5-phosphate into L-glutamate 5-semialdehyde and phosphate. The product spontaneously undergoes cyclization to form 1-pyrroline-5-carboxylate. In Ruthia magnifica subsp. Calyptogena magnifica, this protein is Gamma-glutamyl phosphate reductase.